A 245-amino-acid polypeptide reads, in one-letter code: Orotidine 5'-phosphate decarboxylase (245 aa).

Substrate contacts are provided by residues Asp22, Lys44, Asp71–Thr80, Thr131, Arg192, Gln201, Gly221, and Arg222. Lys73 acts as the Proton donor in catalysis.

It belongs to the OMP decarboxylase family. Type 1 subfamily. Homodimer.

The enzyme catalyses orotidine 5'-phosphate + H(+) = UMP + CO2. It functions in the pathway pyrimidine metabolism; UMP biosynthesis via de novo pathway; UMP from orotate: step 2/2. Functionally, catalyzes the decarboxylation of orotidine 5'-monophosphate (OMP) to uridine 5'-monophosphate (UMP). The chain is Orotidine 5'-phosphate decarboxylase from Yersinia pseudotuberculosis serotype O:3 (strain YPIII).